The chain runs to 119 residues: Non-specific lipid-transfer protein 12 (119 aa).

Positions 1–24 are cleaved as a signal peptide; it reads MAFTPKIITCLIVLTIYMASPTES. Cystine bridges form between cysteine 28–cysteine 75, cysteine 38–cysteine 52, cysteine 53–cysteine 98, and cysteine 73–cysteine 112.

This sequence belongs to the plant LTP family.

Functionally, plant non-specific lipid-transfer proteins transfer phospholipids as well as galactolipids across membranes. May play a role in wax or cutin deposition in the cell walls of expanding epidermal cells and certain secretory tissues. In Arabidopsis thaliana (Mouse-ear cress), this protein is Non-specific lipid-transfer protein 12 (LTP12).